The primary structure comprises 447 residues: Signal recognition particle 54 kDa protein (447 aa).

Residues 108 to 115 (GLYGMGKT), 188 to 192 (DTAGR), and 246 to 249 (TKLD) each bind GTP.

Belongs to the GTP-binding SRP family. SRP54 subfamily. As to quaternary structure, part of the signal recognition particle protein translocation system, which is composed of SRP and FtsY. Archaeal SRP consists of a 7S RNA molecule of 300 nucleotides and two protein subunits: SRP54 and SRP19.

The protein localises to the cytoplasm. The enzyme catalyses GTP + H2O = GDP + phosphate + H(+). Functionally, involved in targeting and insertion of nascent membrane proteins into the cytoplasmic membrane. Binds to the hydrophobic signal sequence of the ribosome-nascent chain (RNC) as it emerges from the ribosomes. The SRP-RNC complex is then targeted to the cytoplasmic membrane where it interacts with the SRP receptor FtsY. The chain is Signal recognition particle 54 kDa protein from Methanopyrus kandleri (strain AV19 / DSM 6324 / JCM 9639 / NBRC 100938).